A 147-amino-acid chain; its full sequence is Ubiquitin-conjugating enzyme E2-17 kDa (147 aa).

Residues Met-1–Met-147 enclose the UBC core domain. Cys-85 functions as the Glycyl thioester intermediate in the catalytic mechanism.

This sequence belongs to the ubiquitin-conjugating enzyme family.

It catalyses the reaction S-ubiquitinyl-[E1 ubiquitin-activating enzyme]-L-cysteine + [E2 ubiquitin-conjugating enzyme]-L-cysteine = [E1 ubiquitin-activating enzyme]-L-cysteine + S-ubiquitinyl-[E2 ubiquitin-conjugating enzyme]-L-cysteine.. The protein operates within protein modification; protein ubiquitination. Catalyzes the covalent attachment of ubiquitin to other proteins. Mediates the selective degradation of short-lived and abnormal proteins. Required for proper telomere behavior during cell divisions and possibly for ubiquitination of proteins involved in postmeiotic stages of spermatogenesis. Deletion mutations are lethal in homozygotes. The protein is Ubiquitin-conjugating enzyme E2-17 kDa (eff) of Drosophila melanogaster (Fruit fly).